Consider the following 230-residue polypeptide: Sperm-associated antigen 7 homolog (230 aa).

The tract at residues 1–45 (MADLLGSILSSMEKPPTVHDQESRRKAREQAARLKKLEEDERRKK) is disordered. The segment covering 16–45 (PTVHDQESRRKAREQAARLKKLEEDERRKK) has biased composition (basic and acidic residues). One can recognise an R3H domain in the interval 46 to 109 (AEFRKKMEKE…ESRYVMLFKK (64 aa)). Residues 119–144 (EAYRKGEEWDPQKAEERRRLKEKAAL) show a composition bias toward basic and acidic residues. 2 disordered regions span residues 119 to 169 (EAYR…KYSH) and 185 to 230 (ANRA…GSSV). S158 carries the post-translational modification Phosphoserine. Positions 196 to 211 (NKRDTRSIEEAMNEIR) are enriched in basic and acidic residues.

The sequence is that of Sperm-associated antigen 7 homolog (spag7) from Danio rerio (Zebrafish).